The chain runs to 192 residues: Interferon (192 aa).

An N-terminal signal peptide occupies residues 1-30 (MAVPASPQHPRGYGILLLTLLMKALAAAAA). Disulfide bonds link cysteine 31-cysteine 128, cysteine 60-cysteine 154, and cysteine 67-cysteine 167. N-linked (GlcNAc...) asparagine glycosylation is found at asparagine 70 and asparagine 77.

This sequence belongs to the alpha/beta interferon family.

It is found in the secreted. Has antiviral activities. This is Interferon from Meleagris gallopavo (Wild turkey).